We begin with the raw amino-acid sequence, 520 residues long: MNGDEQNKKKLRSDAMFGKINQFVTLQKDETAKYNSLFTKVTESIVSILKEKDEVFKKYYRNTMYAGSFYKQTRVGQPKEFDLNLILCLPDIDSVKIEKGRPGFAKIKFDERKISSVWTEHKVLNKWLDSEGYLDNGKLRGWFEGMVKKSLNPSEKNSNKFRIYSKDSSSPLCEAEIKKSGPAFTLIVNDGSMEFAVDLVPVLEFSQSPPLSNFEKLKEPWHLVPKPLKNGDVPNQNWRYCFYHYEKEMLKKNGKVKPIIRHIKKLRDTQNWSILASYYIETLFFHVLSKNDFDQNESQTRLLVYMLKELSKAFKSGLLNYFWDKTFNLFGELTEDQIVGVQNRLDKIIKEIEADPTTMTQYFLTKEEQKKLKEIEEKEKTQPKKEVNVDKTNGLSSTFPLIRETKSEKNKKIIQESENRETSKNEIKALKEMVLSLKAEFKDFKNSIKQKPIDQTPETEGTDEKEMKKLLLLLINEVKQLKLNVGRLETKIDQTNEQIKNIKSQSTFFDVMETGVPLLN.

Residues S68 and 80–82 (EFD) each bind ATP. Positions 80, 82, and 198 each coordinate Mg(2+). A GTP-binding site is contributed by D198. K264 provides a ligand contact to ATP. L288 and D294 together coordinate Mn(2+).

The protein belongs to the mab-21 family. It depends on Mg(2+) as a cofactor. Requires Mn(2+) as cofactor.

The catalysed reaction is GTP + ATP = 2',3'-cGAMP + 2 diphosphate. It carries out the reaction GTP + ATP = pppGp(2'-5')A + diphosphate. It catalyses the reaction pppGp(2'-5')A = 2',3'-cGAMP + diphosphate. Functionally, nucleotidyltransferase that catalyzes the formation of cyclic GMP-AMP (2',3'-cGAMP) from ATP and GTP and plays a key role in innate immunity. Acts as a key sensor of double-stranded RNA (dsRNA), the presence of dsRNA in the cytoplasm being a danger signal that triggers the immune responses. Directly binds dsRNA, activating the nucleotidyltransferase activity, leading to synthesis of 2',3'-cGAMP, a second messenger that binds to and activates Sting, thereby triggering the immune response via activation of the NF-kappa-B transcription factor. The protein is Cyclic GMP-AMP synthase-like receptor of Microplitis demolitor (Parasitoid wasp).